A 56-amino-acid polypeptide reads, in one-letter code: Large ribosomal subunit protein bL32 (56 aa).

The interval 1–37 (MAVQQNKKSRSKRGMRRSHDALSTAQLSVDATSGELH) is disordered. Positions 7–16 (KKSRSKRGMR) are enriched in basic residues. A compositionally biased stretch (polar residues) spans 21 to 31 (ALSTAQLSVDA).

The protein belongs to the bacterial ribosomal protein bL32 family.

The chain is Large ribosomal subunit protein bL32 from Shewanella pealeana (strain ATCC 700345 / ANG-SQ1).